The primary structure comprises 193 residues: UPF0301 protein Bfl251 (193 aa).

Belongs to the UPF0301 (AlgH) family.

This chain is UPF0301 protein Bfl251, found in Blochmanniella floridana.